Reading from the N-terminus, the 629-residue chain is Dihydroxy-acid dehydratase 2 (629 aa).

Asp82 lines the Mg(2+) pocket. Cys123 provides a ligand contact to [2Fe-2S] cluster. Residues Asp124 and Lys125 each contribute to the Mg(2+) site. Lys125 is subject to N6-carboxylysine. Cys197 is a binding site for [2Fe-2S] cluster. Glu493 serves as a coordination point for Mg(2+). Residue Ser519 is the Proton acceptor of the active site. The disordered stretch occupies residues 603–629 (DKGGVRRLPPDELGGPEAAFDTQTRAG).

The protein belongs to the IlvD/Edd family. As to quaternary structure, homodimer. It depends on [2Fe-2S] cluster as a cofactor. Mg(2+) is required as a cofactor.

It carries out the reaction (2R)-2,3-dihydroxy-3-methylbutanoate = 3-methyl-2-oxobutanoate + H2O. It catalyses the reaction (2R,3R)-2,3-dihydroxy-3-methylpentanoate = (S)-3-methyl-2-oxopentanoate + H2O. It functions in the pathway amino-acid biosynthesis; L-isoleucine biosynthesis; L-isoleucine from 2-oxobutanoate: step 3/4. The protein operates within amino-acid biosynthesis; L-valine biosynthesis; L-valine from pyruvate: step 3/4. In terms of biological role, functions in the biosynthesis of branched-chain amino acids. Catalyzes the dehydration of (2R,3R)-2,3-dihydroxy-3-methylpentanoate (2,3-dihydroxy-3-methylvalerate) into 2-oxo-3-methylpentanoate (2-oxo-3-methylvalerate) and of (2R)-2,3-dihydroxy-3-methylbutanoate (2,3-dihydroxyisovalerate) into 2-oxo-3-methylbutanoate (2-oxoisovalerate), the penultimate precursor to L-isoleucine and L-valine, respectively. The polypeptide is Dihydroxy-acid dehydratase 2 (Nocardia farcinica (strain IFM 10152)).